The following is an 872-amino-acid chain: Leucine-rich repeat-containing protein 66 (872 aa).

The chain crosses the membrane as a helical span at residues 4-24 (FYVRVTILVTGLCFVETVTTP). N-linked (GlcNAc...) asparagine glycans are attached at residues Asn45 and Asn108. 5 LRR repeats span residues 142–164 (RLQVLILQRNQLSGTPKGLWKLK), 165–186 (SLRSLDLSFNRIVHIGLSDFHG), 189–210 (QLESIYLKSNKICTIHPKAFKG), 213–234 (KLQVVDLRSNALTTLVPIVTIA), and 239–259 (HLELGLADNQWQCSESNVNFQ). The interval 339 to 363 (LRGMWPQSPVELRDSQDEQVTDRKD) is disordered. Basic and acidic residues predominate over residues 349 to 363 (ELRDSQDEQVTDRKD). Residues 371 to 391 (LAICLSVFITFVVAFCLGAFA) form a helical membrane-spanning segment. Positions 467–483 (QMLGSNGTDPGHQQSPE) are enriched in polar residues. 4 disordered regions span residues 467 to 501 (QMLGSNGTDPGHQQSPEQLKDSNESRSGDSIVLPS), 560 to 579 (GTFPSSVESRRDDLHPSQPR), 695 to 761 (NYES…SQRI), and 776 to 872 (LISG…SKHW). Asn472 carries an N-linked (GlcNAc...) asparagine glycan. Positions 484 to 493 (QLKDSNESRS) are enriched in basic and acidic residues. Ser718 is modified (phosphoserine). Composition is skewed to polar residues over residues 725–736 (SVENDGTSQPLP), 746–760 (SVTSAESVEDLTSQR), and 785–805 (CETNQENDSSSLDPENRSTWP). Position 752 is a phosphoserine (Ser752). Residues 831 to 841 (VDWHYSLRDLE) are compositionally biased toward basic and acidic residues.

Its subcellular location is the membrane. The protein is Leucine-rich repeat-containing protein 66 (Lrrc66) of Mus musculus (Mouse).